The sequence spans 101 residues: NADH-quinone oxidoreductase subunit K (101 aa).

The next 3 membrane-spanning stretches (helical) occupy residues 4–24, 30–50, and 61–81; these read LSHY…GIFL, IVLL…FIAF, and IFVF…LAIL.

This sequence belongs to the complex I subunit 4L family. As to quaternary structure, NDH-1 is composed of 14 different subunits. Subunits NuoA, H, J, K, L, M, N constitute the membrane sector of the complex.

The protein localises to the cell inner membrane. It carries out the reaction a quinone + NADH + 5 H(+)(in) = a quinol + NAD(+) + 4 H(+)(out). Functionally, NDH-1 shuttles electrons from NADH, via FMN and iron-sulfur (Fe-S) centers, to quinones in the respiratory chain. The immediate electron acceptor for the enzyme in this species is believed to be ubiquinone. Couples the redox reaction to proton translocation (for every two electrons transferred, four hydrogen ions are translocated across the cytoplasmic membrane), and thus conserves the redox energy in a proton gradient. The chain is NADH-quinone oxidoreductase subunit K from Aromatoleum aromaticum (strain DSM 19018 / LMG 30748 / EbN1) (Azoarcus sp. (strain EbN1)).